The following is a 284-amino-acid chain: L-ribulose-5-phosphate 3-epimerase UlaE (284 aa).

This sequence belongs to the L-ribulose-5-phosphate 3-epimerase family.

The enzyme catalyses L-ribulose 5-phosphate = L-xylulose 5-phosphate. It participates in cofactor degradation; L-ascorbate degradation; D-xylulose 5-phosphate from L-ascorbate: step 3/4. In terms of biological role, catalyzes the isomerization of L-xylulose-5-phosphate to L-ribulose-5-phosphate. Is involved in the anaerobic L-ascorbate utilization. In Escherichia coli (strain SMS-3-5 / SECEC), this protein is L-ribulose-5-phosphate 3-epimerase UlaE.